Reading from the N-terminus, the 291-residue chain is ATP synthase gamma chain (291 aa).

The protein belongs to the ATPase gamma chain family. F-type ATPases have 2 components, CF(1) - the catalytic core - and CF(0) - the membrane proton channel. CF(1) has five subunits: alpha(3), beta(3), gamma(1), delta(1), epsilon(1). CF(0) has three main subunits: a, b and c.

The protein localises to the cell inner membrane. Functionally, produces ATP from ADP in the presence of a proton gradient across the membrane. The gamma chain is believed to be important in regulating ATPase activity and the flow of protons through the CF(0) complex. The sequence is that of ATP synthase gamma chain from Burkholderia lata (strain ATCC 17760 / DSM 23089 / LMG 22485 / NCIMB 9086 / R18194 / 383).